The sequence spans 217 residues: Redox-sensing transcriptional repressor Rex (217 aa).

The H-T-H motif DNA-binding region spans 18–57 (LYYRFLKNLHASGKQRVSSAELSDAVKVDSATIRRDFSYF). Position 92-97 (92-97 (GVGNLG)) interacts with NAD(+).

It belongs to the transcriptional regulatory Rex family. As to quaternary structure, homodimer.

It localises to the cytoplasm. In terms of biological role, modulates transcription in response to changes in cellular NADH/NAD(+) redox state. The polypeptide is Redox-sensing transcriptional repressor Rex (Bacillus pumilus (strain SAFR-032)).